Here is a 109-residue protein sequence, read N- to C-terminus: Nucleoid-associated protein LBUL_1514 (109 aa).

The protein belongs to the YbaB/EbfC family. Homodimer.

The protein resides in the cytoplasm. Its subcellular location is the nucleoid. In terms of biological role, binds to DNA and alters its conformation. May be involved in regulation of gene expression, nucleoid organization and DNA protection. This Lactobacillus delbrueckii subsp. bulgaricus (strain ATCC BAA-365 / Lb-18) protein is Nucleoid-associated protein LBUL_1514.